A 209-amino-acid chain; its full sequence is Small ribosomal subunit protein eS1 (209 aa).

The protein belongs to the eukaryotic ribosomal protein eS1 family.

This chain is Small ribosomal subunit protein eS1, found in Picrophilus torridus (strain ATCC 700027 / DSM 9790 / JCM 10055 / NBRC 100828 / KAW 2/3).